A 96-amino-acid chain; its full sequence is UPF0235 protein NT01EI_0281 (96 aa).

It belongs to the UPF0235 family.

The polypeptide is UPF0235 protein NT01EI_0281 (Edwardsiella ictaluri (strain 93-146)).